The primary structure comprises 409 residues: Multifunctional CCA protein (409 aa).

ATP is bound by residues Gly-8 and Arg-11. CTP contacts are provided by Gly-8 and Arg-11. Mg(2+) is bound by residues Asp-21 and Asp-23. ATP is bound by residues Arg-91, Arg-137, and Arg-140. CTP contacts are provided by Arg-91, Arg-137, and Arg-140. Positions 228-329 constitute an HD domain; sequence SGLHTLSVLE…LELLQSFDVY (102 aa).

It belongs to the tRNA nucleotidyltransferase/poly(A) polymerase family. Bacterial CCA-adding enzyme type 1 subfamily. Monomer. Can also form homodimers and oligomers. Mg(2+) serves as cofactor. It depends on Ni(2+) as a cofactor.

The catalysed reaction is a tRNA precursor + 2 CTP + ATP = a tRNA with a 3' CCA end + 3 diphosphate. It catalyses the reaction a tRNA with a 3' CCA end + 2 CTP + ATP = a tRNA with a 3' CCACCA end + 3 diphosphate. Functionally, catalyzes the addition and repair of the essential 3'-terminal CCA sequence in tRNAs without using a nucleic acid template. Adds these three nucleotides in the order of C, C, and A to the tRNA nucleotide-73, using CTP and ATP as substrates and producing inorganic pyrophosphate. tRNA 3'-terminal CCA addition is required both for tRNA processing and repair. Also involved in tRNA surveillance by mediating tandem CCA addition to generate a CCACCA at the 3' terminus of unstable tRNAs. While stable tRNAs receive only 3'-terminal CCA, unstable tRNAs are marked with CCACCA and rapidly degraded. The sequence is that of Multifunctional CCA protein from Pseudomonas fluorescens (strain Pf0-1).